Here is a 61-residue protein sequence, read N- to C-terminus: Potassium channel toxin alpha-KTx 18.1 (61 aa).

The signal sequence occupies residues 1–24; that stretch reads MRFTGIILILISMTLIDSFFEMKV. 3 cysteine pairs are disulfide-bonded: Cys33-Cys52, Cys38-Cys57, and Cys42-Cys59.

As to expression, expressed by the venom gland.

The protein localises to the secreted. Reversible blocker of both Kv1.3/KCNA3 potassium channels (high affinity) and Shaker B (mammalian Kv1.1 analog) potassium channels (very low affinity). The sequence is that of Potassium channel toxin alpha-KTx 18.1 from Tityus obscurus (Amazonian scorpion).